The following is a 368-amino-acid chain: UDP-N-acetylglucosamine--N-acetylmuramyl-(pentapeptide) pyrophosphoryl-undecaprenol N-acetylglucosamine transferase (368 aa).

Residues 10–12, Asn-128, Arg-170, Ser-199, Ile-250, and Gln-295 each bind UDP-N-acetyl-alpha-D-glucosamine; that span reads TGG.

Belongs to the glycosyltransferase 28 family. MurG subfamily.

The protein resides in the cell inner membrane. The catalysed reaction is di-trans,octa-cis-undecaprenyl diphospho-N-acetyl-alpha-D-muramoyl-L-alanyl-D-glutamyl-meso-2,6-diaminopimeloyl-D-alanyl-D-alanine + UDP-N-acetyl-alpha-D-glucosamine = di-trans,octa-cis-undecaprenyl diphospho-[N-acetyl-alpha-D-glucosaminyl-(1-&gt;4)]-N-acetyl-alpha-D-muramoyl-L-alanyl-D-glutamyl-meso-2,6-diaminopimeloyl-D-alanyl-D-alanine + UDP + H(+). It functions in the pathway cell wall biogenesis; peptidoglycan biosynthesis. Its function is as follows. Cell wall formation. Catalyzes the transfer of a GlcNAc subunit on undecaprenyl-pyrophosphoryl-MurNAc-pentapeptide (lipid intermediate I) to form undecaprenyl-pyrophosphoryl-MurNAc-(pentapeptide)GlcNAc (lipid intermediate II). The chain is UDP-N-acetylglucosamine--N-acetylmuramyl-(pentapeptide) pyrophosphoryl-undecaprenol N-acetylglucosamine transferase from Chlorobium phaeovibrioides (strain DSM 265 / 1930) (Prosthecochloris vibrioformis (strain DSM 265)).